The chain runs to 647 residues: LIM domain kinase 1 (647 aa).

LIM zinc-binding domains follow at residues 25 to 75 (CASC…CKKD) and 84 to 137 (CHGC…CGQC). Positions 165-258 (LVSIPASAHG…LLQLTLEHDP (94 aa)) constitute a PDZ domain. Position 210 is a phosphoserine (serine 210). Threonine 229 carries the phosphothreonine modification. The interval 256-316 (HDPHDSLGHG…SLVSPASQRK (61 aa)) is disordered. Residues 278–289 (HTPSGQAGSSAR) are compositionally biased toward polar residues. Serine 298, serine 302, serine 307, and serine 310 each carry phosphoserine. Serine 323 carries the post-translational modification Phosphoserine; by MAPKAPK2. Position 337 is a phosphoserine (serine 337). The Protein kinase domain maps to 339-604 (LIHGEVLGKG…PSFVKLEQWL (266 aa)). ATP is bound by residues 345-353 (LGKGCFGQA) and lysine 368. Aspartate 460 is a catalytic residue. Threonine 508 is modified (phosphothreonine; by ROCK1 and PAK1).

It belongs to the protein kinase superfamily. TKL Ser/Thr protein kinase family. As to quaternary structure, interacts (via LIM domain) with the cytoplasmic domain of NRG1. Interacts with NISCH. Interacts with RLIM and RNF6. Self-associates to form homodimers. Interacts with HSP90AA1; this interaction promotes LIMK1 dimerization and subsequent transphosphorylation. Interacts with CDKN1C. Interacts with SSH1. Interacts with ROCK1. Interacts (via LIM zinc-binding domains) with FAM89B/LRAP25 (via LRR repeat). Forms a tripartite complex with CDC42BPA, CDC42BPB and FAM89B/LRAP25. Post-translationally, autophosphorylated. Phosphorylated on Thr-508 by ROCK1 and PAK1, resulting in activation. Phosphorylated by PAK4 which increases the ability of LIMK1 to phosphorylate cofilin. Phosphorylated at Ser-323 by MAPKAPK2 during activation of VEGFA-induced signaling, which results in activation of LIMK1 and promotion of actin reorganization, cell migration, and tubule formation of endothelial cells. Dephosphorylated and inactivated by SSH1. Phosphorylated by CDC42BP. In terms of processing, ubiquitinated. 'Lys-48'-linked polyubiquitination by RNF6 leads to proteasomal degradation through the 26S proteasome, modulating LIMK1 levels in the growth cone and its effect on axonal outgrowth. Also polyubiquitinated by RLIM.

It localises to the cytoplasm. The protein resides in the nucleus. The protein localises to the cytoskeleton. Its subcellular location is the cell projection. It is found in the lamellipodium. The enzyme catalyses L-seryl-[protein] + ATP = O-phospho-L-seryl-[protein] + ADP + H(+). The catalysed reaction is L-threonyl-[protein] + ATP = O-phospho-L-threonyl-[protein] + ADP + H(+). In terms of biological role, serine/threonine-protein kinase that plays an essential role in the regulation of actin filament dynamics. Acts downstream of several Rho family GTPase signal transduction pathways. Activated by upstream kinases including ROCK1, PAK1 and PAK4, which phosphorylate LIMK1 on a threonine residue located in its activation loop. LIMK1 subsequently phosphorylates and inactivates the actin binding/depolymerizing factors cofilin-1/CFL1, cofilin-2/CFL2 and destrin/DSTN, thereby preventing the cleavage of filamentous actin (F-actin), and stabilizing the actin cytoskeleton. In this way LIMK1 regulates several actin-dependent biological processes including cell motility, cell cycle progression, and differentiation. Phosphorylates TPPP on serine residues, thereby promoting microtubule disassembly. Stimulates axonal outgrowth and may be involved in brain development. The polypeptide is LIM domain kinase 1 (Limk1) (Rattus norvegicus (Rat)).